Consider the following 133-residue polypeptide: Small ribosomal subunit protein uS8 (133 aa).

Belongs to the universal ribosomal protein uS8 family. As to quaternary structure, part of the 30S ribosomal subunit. Contacts proteins S5 and S12.

Its function is as follows. One of the primary rRNA binding proteins, it binds directly to 16S rRNA central domain where it helps coordinate assembly of the platform of the 30S subunit. This chain is Small ribosomal subunit protein uS8, found in Mycoplasma mobile (strain ATCC 43663 / 163K / NCTC 11711) (Mesomycoplasma mobile).